The chain runs to 257 residues: DNA repair protein RecO (257 aa).

Belongs to the RecO family.

Involved in DNA repair and RecF pathway recombination. This Synechococcus sp. (strain CC9605) protein is DNA repair protein RecO.